An 856-amino-acid polypeptide reads, in one-letter code: V-type proton ATPase 116 kDa subunit a 2 (856 aa).

Residues 1-393 (MGSLFRSESM…DAYGVGSYRE (393 aa)) lie on the Cytoplasmic side of the membrane. The helical transmembrane segment at 394 to 412 (VNPALFTIITFPFLFAVMF) threads the bilayer. Over 413-414 (GD) the chain is Vacuolar. The helical transmembrane segment at 415-431 (FGHGFVMFLFALLLVLN) threads the bilayer. The Cytoplasmic portion of the chain corresponds to 432–445 (ENHPRLSQSQEILR). The helical transmembrane segment at 446–475 (MFFDGRYILLLMGLFSVYTGLIYNDCFSKS) threads the bilayer. The Vacuolar portion of the chain corresponds to 476 to 549 (VNLFGSGWNV…ATNRLTFLNS (74 aa)). The helical transmembrane segment at 550-569 (FKMKMSVILGIFHMTFGVVL) threads the bilayer. Residues 570–587 (GIFNHLHFRKKFNVYLVS) lie on the Cytoplasmic side of the membrane. Residues 588-608 (VPEILFMLCIFGYLIFMIIYK) form a helical membrane-spanning segment. Residues 609–651 (WLAYSAETSREAPSILIEFINMFLFPTSKTHGLYPGQAHVQRV) are Vacuolar-facing. Residues 652 to 671 (LVALTVLAVPVLFLGKPLFL) form a helical membrane-spanning segment. Over 672 to 739 (LWLHNGRNCF…EILMTQAIHS (68 aa)) the chain is Cytoplasmic. A phosphoserine mark is found at serine 695 and serine 700. The helical transmembrane segment at 740-764 (IEYCLGCISNTASYLRLWALSLAHA) threads the bilayer. Topologically, residues 765-785 (QLSDVLWAMLMRVGLRVDTTY) are vacuolar. A helical membrane pass occupies residues 786–824 (GVLLLLPVMAFFAVLTIFILLVMEGLSAFLHAIRLHWVE). At 825–856 (FQNKFYVGAGTKFVPFSFSLLSSKFSNDDSIA) the chain is on the cytoplasmic side.

Belongs to the V-ATPase 116 kDa subunit family. V-ATPase is a heteromultimeric enzyme made up of two complexes: the ATP-hydrolytic V1 complex and the proton translocation V0 complex. The V1 complex consists of three catalytic AB heterodimers that form a heterohexamer, three peripheral stalks each consisting of EG heterodimers, one central rotor including subunits D and F, and the regulatory subunits C and H. The proton translocation complex V0 consists of the proton transport subunit a, a ring of proteolipid subunits c9c'', rotary subunit d, subunits e and f, and the accessory subunits ATP6AP1/Ac45 and ATP6AP2/PRR. Directly interacts with PSCD2 through its N-terminal cytosolic tail in an intra-endosomal acidification-dependent manner. Disruption of this interaction results in the inhibition of endocytosis. Interacts with SPAAR. Relatively high expression in kidney and liver. Lower levels in the spleen, testis, and skeletal muscle. Also expressed in the thymus.

The protein resides in the cell membrane. Its subcellular location is the endosome membrane. Functionally, subunit of the V0 complex of vacuolar(H+)-ATPase (V-ATPase), a multisubunit enzyme composed of a peripheral complex (V1) that hydrolyzes ATP and a membrane integral complex (V0) that translocates protons. V-ATPase is responsible for acidifying and maintaining the pH of intracellular compartments and in some cell types, is targeted to the plasma membrane, where it is responsible for acidifying the extracellular environment. Essential component of the endosomal pH-sensing machinery. May play a role in maintaining the Golgi functions, such as glycosylation maturation, by controlling the Golgi pH. In aerobic conditions, involved in intracellular iron homeostasis, thus triggering the activity of Fe(2+) prolyl hydroxylase (PHD) enzymes, and leading to HIF1A hydroxylation and subsequent proteasomal degradation. The polypeptide is V-type proton ATPase 116 kDa subunit a 2 (Atp6v0a2) (Mus musculus (Mouse)).